An 854-amino-acid polypeptide reads, in one-letter code: DNA mismatch repair protein MutS (854 aa).

Glycine 616–serine 623 serves as a coordination point for ATP.

It belongs to the DNA mismatch repair MutS family.

This protein is involved in the repair of mismatches in DNA. It is possible that it carries out the mismatch recognition step. This protein has a weak ATPase activity. This is DNA mismatch repair protein MutS from Pectobacterium atrosepticum (strain SCRI 1043 / ATCC BAA-672) (Erwinia carotovora subsp. atroseptica).